The following is a 312-amino-acid chain: Methionyl-tRNA formyltransferase (312 aa).

113–116 (SLLP) serves as a coordination point for (6S)-5,6,7,8-tetrahydrofolate.

It belongs to the Fmt family.

It catalyses the reaction L-methionyl-tRNA(fMet) + (6R)-10-formyltetrahydrofolate = N-formyl-L-methionyl-tRNA(fMet) + (6S)-5,6,7,8-tetrahydrofolate + H(+). In terms of biological role, attaches a formyl group to the free amino group of methionyl-tRNA(fMet). The formyl group appears to play a dual role in the initiator identity of N-formylmethionyl-tRNA by promoting its recognition by IF2 and preventing the misappropriation of this tRNA by the elongation apparatus. The sequence is that of Methionyl-tRNA formyltransferase from Francisella philomiragia subsp. philomiragia (strain ATCC 25017 / CCUG 19701 / FSC 153 / O#319-036).